The primary structure comprises 91 residues: CRISPR-associated endoribonuclease Cas2 2 (91 aa).

A Mg(2+)-binding site is contributed by Asp8.

It belongs to the CRISPR-associated endoribonuclease Cas2 protein family. Homodimer, forms a heterotetramer with a Cas1 homodimer. Mg(2+) serves as cofactor.

Its function is as follows. CRISPR (clustered regularly interspaced short palindromic repeat), is an adaptive immune system that provides protection against mobile genetic elements (viruses, transposable elements and conjugative plasmids). CRISPR clusters contain sequences complementary to antecedent mobile elements and target invading nucleic acids. CRISPR clusters are transcribed and processed into CRISPR RNA (crRNA). Functions as a ssRNA-specific endoribonuclease. Involved in the integration of spacer DNA into the CRISPR cassette. The chain is CRISPR-associated endoribonuclease Cas2 2 from Pyrobaculum aerophilum (strain ATCC 51768 / DSM 7523 / JCM 9630 / CIP 104966 / NBRC 100827 / IM2).